The following is a 373-amino-acid chain: 3 beta-hydroxysteroid dehydrogenase/Delta 5--&gt;4-isomerase type 2 (373 aa).

Tyr-155 serves as the catalytic Proton acceptor. Position 159 (Lys-159) interacts with NAD(+). Residues 288 to 308 (LPLLYWLAFLLETVSFLLRPF) form a helical membrane-spanning segment.

This sequence belongs to the 3-beta-HSD family. In terms of tissue distribution, adrenal glands, testes and ovaries.

The protein resides in the endoplasmic reticulum membrane. It is found in the mitochondrion membrane. It catalyses the reaction a 3beta-hydroxy-Delta(5)-steroid + NAD(+) = a 3-oxo-Delta(5)-steroid + NADH + H(+). The catalysed reaction is a 3-oxo-Delta(5)-steroid = a 3-oxo-Delta(4)-steroid. Its pathway is lipid metabolism; steroid biosynthesis. Functionally, 3-beta-HSD is a bifunctional enzyme, that catalyzes the oxidative conversion of Delta(5)-ene-3-beta-hydroxy steroid, and the oxidative conversion of ketosteroids. The 3-beta-HSD enzymatic system plays a crucial role in the biosynthesis of all classes of hormonal steroids. The polypeptide is 3 beta-hydroxysteroid dehydrogenase/Delta 5--&gt;4-isomerase type 2 (Hsd3b) (Rattus norvegicus (Rat)).